The primary structure comprises 541 residues: Chaperonin GroEL (541 aa).

ATP-binding positions include 29–32 (TLGP), 86–90 (DGTTT), Gly413, 477–479 (DAL), and Asp493.

It belongs to the chaperonin (HSP60) family. As to quaternary structure, forms a cylinder of 14 subunits composed of two heptameric rings stacked back-to-back. Interacts with the co-chaperonin GroES.

It is found in the cytoplasm. It carries out the reaction ATP + H2O + a folded polypeptide = ADP + phosphate + an unfolded polypeptide.. Functionally, together with its co-chaperonin GroES, plays an essential role in assisting protein folding. The GroEL-GroES system forms a nano-cage that allows encapsulation of the non-native substrate proteins and provides a physical environment optimized to promote and accelerate protein folding. The protein is Chaperonin GroEL of Clostridium botulinum (strain 657 / Type Ba4).